Consider the following 1470-residue polypeptide: Rap guanine nucleotide exchange factor (1470 aa).

2 disordered regions span residues 130–227 and 250–313; these read PTEP…SYND and HRRE…GGFM. A compositionally biased stretch (pro residues) spans 173–183; it reads MPPPPVPPRPL. Low complexity-rich tracts occupy residues 184 to 193 and 215 to 224; these read RLPQTAAKGP and TTSSSSSNTS. Residues 256-266 show a composition bias toward polar residues; sequence NSVGGQAQNGI. A compositionally biased stretch (low complexity) spans 275 to 292; that stretch reads RSTASSTTTEGETASNEG. An a nucleoside 3',5'-cyclic phosphate-binding site is contributed by 347–463; it reads AFAALPMSIK…IEKDRDGLTG (117 aa). An N-terminal Ras-GEF domain is found at 478–592; sequence CGQVLIKGKP…SLLNIACSVK (115 aa). The PDZ domain maps to 597 to 679; sequence QVILTRRKDD…LTLMLKNNVL (83 aa). The region spanning 782–869 is the Ras-associating domain; the sequence is PEHVLKIYRN…SRYYLKNNSR (88 aa). The 231-residue stretch at 894-1124 folds into the Ras-GEF domain; that stretch reads NAQVVAAQLT…FENSNVATMR (231 aa). Residues 1176 to 1189 show a composition bias toward polar residues; the sequence is QTAHRGANSSSTAN. Disordered regions lie at residues 1176–1213, 1253–1326, 1347–1370, and 1422–1455; these read QTAHRGANSSSTANIRRVPSPTPSSLSSQSAGSADQSS, KVKG…NIPP, VIPTHPHGHSPTSPRCRSRSPASS, and ATLPNHVSPRGLPPKSRPTILPGSHTNSSSRMGT. Low complexity predominate over residues 1198–1211; sequence PSSLSSQSAGSADQ. Polar residues-rich tracts occupy residues 1260–1274 and 1282–1308; these read QITSPSTSARSSLQR and RQATSSAQGPVQLNEETSTVTTYYQSD. The span at 1309-1321 shows a compositional bias: basic and acidic residues; the sequence is NGRRQRSGSEGRF. Low complexity predominate over residues 1349–1370; sequence PTHPHGHSPTSPRCRSRSPASS.

The protein belongs to the RAPGEF2 family. In terms of tissue distribution, expressed in hermaphrodite-specific neurons (HSNs), oviduct sheath cells and lateral seam cells.

Functionally, acts as a guanine nucleotide exchange factor for small G protein GTPases like rap-1 and rap-2. Required in the hypodermis, especially in the seam cells, for proper formation of the cuticle. The polypeptide is Rap guanine nucleotide exchange factor (pxf-1) (Caenorhabditis elegans).